The primary structure comprises 563 residues: Eukaryotic translation initiation factor 3 subunit D-1 (563 aa).

Residues 98 to 167 (VQKPPHQRGR…GPPPKMRESS (70 aa)) form a disordered region. Positions 100–121 (KPPHQRGRFRNMRNSRSGRGRN) are enriched in basic residues. Thr-128 carries the phosphothreonine modification. Positions 291–305 (EFDLLTVNETSVEPP) are RNA gate.

Belongs to the eIF-3 subunit D family. Component of the eukaryotic translation initiation factor 3 (eIF-3) complex. The eIF-3 complex interacts with pix.

The protein resides in the cytoplasm. Its function is as follows. mRNA cap-binding component of the eukaryotic translation initiation factor 3 (eIF-3) complex, which is involved in protein synthesis of a specialized repertoire of mRNAs and, together with other initiation factors, stimulates binding of mRNA and methionyl-tRNAi to the 40S ribosome. The eIF-3 complex specifically targets and initiates translation of a subset of mRNAs involved in cell proliferation. In the eIF-3 complex, eif3d specifically recognizes and binds the 7-methylguanosine cap of a subset of mRNAs. The protein is Eukaryotic translation initiation factor 3 subunit D-1 of Drosophila virilis (Fruit fly).